Reading from the N-terminus, the 261-residue chain is DNA repair protein RecO (261 aa).

The protein belongs to the RecO family.

Involved in DNA repair and RecF pathway recombination. In Pelodictyon phaeoclathratiforme (strain DSM 5477 / BU-1), this protein is DNA repair protein RecO.